A 419-amino-acid polypeptide reads, in one-letter code: O-antigen ligase (419 aa).

Over methionine 1–methionine 19 the chain is Cytoplasmic. A helical transmembrane segment spans residues isoleucine 20–valine 38. The Periplasmic segment spans residues aspartate 39–serine 43. The helical transmembrane segment at isoleucine 44 to arginine 61 threads the bilayer. Topologically, residues glycine 62–asparagine 71 are cytoplasmic. Residues leucine 72 to alanine 91 form a helical membrane-spanning segment. At phenylalanine 92 to leucine 107 the chain is on the periplasmic side. Residues asparagine 108–threonine 125 traverse the membrane as a helical segment. At serine 126–serine 134 the chain is on the cytoplasmic side. The chain crosses the membrane as a helical span at residues valine 135 to isoleucine 153. Topologically, residues asparagine 154–glycine 167 are periplasmic. Residues threonine 168 to isoleucine 187 form a helical membrane-spanning segment. Residues leucine 188–histidine 194 lie on the Cytoplasmic side of the membrane. The helical transmembrane segment at proline 195–leucine 211 threads the bilayer. At threonine 212–alanine 216 the chain is on the periplasmic side. A helical transmembrane segment spans residues threonine 217–asparagine 234. The Cytoplasmic portion of the chain corresponds to lysine 235–phenylalanine 240. A helical transmembrane segment spans residues threonine 241 to asparagine 259. The Periplasmic portion of the chain corresponds to lysine 260 to lysine 348. The chain crosses the membrane as a helical span at residues glycine 349–alanine 367. At tyrosine 368–alanine 372 the chain is on the cytoplasmic side. The helical transmembrane segment at leucine 373–isoleucine 391 threads the bilayer. Residues isoleucine 392–serine 396 lie on the Periplasmic side of the membrane. A helical membrane pass occupies residues isoleucine 397–asparagine 412. The Cytoplasmic portion of the chain corresponds to asparagine 413 to asparagine 419.

In terms of assembly, homodimer.

Its subcellular location is the cell inner membrane. The enzyme catalyses a lipid-linked O antigen + a lipid A-core oligosaccharide = a lipopolysaccharide + a polyisoprenyl diphosphate.. Its pathway is bacterial outer membrane biogenesis; lipopolysaccharide biosynthesis. Activity does not require ATP and magnesium ions. Functionally, transferase involved in the biosynthesis of the lipopolysaccharide (LPS). In vitro, catalyzes the transfer of a polymerized O-antigen molecule from its polyprenyl diphosphate membrane anchor to a terminal sugar of the lipid A-core oligosaccharide, finalizing the biosynthesis of the lipopolysaccharide. The enzyme is functional and can be used to give diverse hybrid O-antigens in vitro, but K12 strains do not produce the O-antigen in vivo due to mutations in the rfb gene cluster. K12 strains are phenotypically rough, their lipopolysaccharide having a complete core structure, but no O-antigen. In highly mucoid K12 strains, WaaL can ligate colanic acid (CA or M-antigen) repeats to a significant proportion of lipopolysaccharide (LPS) core acceptor molecules, forming the LPS glycoform M(LPS). The attachment point was identified as O-7 of the L-glycero-D-manno-heptose of the outer LPS core, the same position used for O-antigen ligation. Cannot catalyze ATP hydrolysis in vitro. The sequence is that of O-antigen ligase from Escherichia coli (strain K12).